The chain runs to 240 residues: UDP-2,3-diacylglucosamine hydrolase (240 aa).

Residues Asp8, His10, Asp41, Asn79, and His114 each contribute to the Mn(2+) site. Residue 79–80 (NR) participates in substrate binding. Substrate contacts are provided by Asp122, Ser160, Asn164, Lys167, and His195. Mn(2+)-binding residues include His195 and His197.

Belongs to the LpxH family. The cofactor is Mn(2+).

Its subcellular location is the cell inner membrane. It catalyses the reaction UDP-2-N,3-O-bis[(3R)-3-hydroxytetradecanoyl]-alpha-D-glucosamine + H2O = 2-N,3-O-bis[(3R)-3-hydroxytetradecanoyl]-alpha-D-glucosaminyl 1-phosphate + UMP + 2 H(+). Its pathway is glycolipid biosynthesis; lipid IV(A) biosynthesis; lipid IV(A) from (3R)-3-hydroxytetradecanoyl-[acyl-carrier-protein] and UDP-N-acetyl-alpha-D-glucosamine: step 4/6. Hydrolyzes the pyrophosphate bond of UDP-2,3-diacylglucosamine to yield 2,3-diacylglucosamine 1-phosphate (lipid X) and UMP by catalyzing the attack of water at the alpha-P atom. Involved in the biosynthesis of lipid A, a phosphorylated glycolipid that anchors the lipopolysaccharide to the outer membrane of the cell. The protein is UDP-2,3-diacylglucosamine hydrolase of Shigella dysenteriae serotype 1 (strain Sd197).